Reading from the N-terminus, the 471-residue chain is Zinc finger protein 385B (471 aa).

The required for induction of apoptosis stretch occupies residues 1–93 (MNMANFLRGF…TGSTCHTTTL (93 aa)). The Matrin-type 1 zinc-finger motif lies at 34–64 (SFCEVCNIQLNSAAQAQVHSNGKSHRKRVKQ). Disordered regions lie at residues 50–92 (QVHS…HTTT) and 175–275 (HYKG…TVVE). The segment covering 76-92 (ASPSSNSSTGSTCHTTT) has biased composition (low complexity). The interval 94–471 (PALVRTPTLM…TPASILFAPY (378 aa)) is interaction with p53/TP53. A Matrin-type 2 zinc finger spans residues 157–187 (ISCNVCQLRFNSDSQAEAHYKGSKHAKKVKA). Over residues 206–220 (ANPSCSITPITGNNS) the composition is skewed to polar residues. Residues 230–250 (KASSSSQPSSSESGSFLLKSG) show a composition bias toward low complexity. Positions 260 to 269 (TSPSKSTNGA) are enriched in polar residues. The segment at 282 to 316 (KKLLYCSLCKVAVNSLSQLEAHNTGSKHKTMVEAR) adopts a Matrin-type 3 zinc-finger fold. Positions 318–340 (GAGPIKSYPRPGSRLKMQNGSKG) are disordered. A Matrin-type 4 zinc finger spans residues 348 to 378 (FHCEICDVHVNSEIQLKQHISSRRHKDRVAG).

In terms of assembly, interacts with p53/TP53; the interaction is direct. In terms of tissue distribution, detected in germinal center of lymph node (at protein level). Expressed in spleen, lymph node and tonsil.

It is found in the nucleus. Its function is as follows. May play a role in p53/TP53-mediated apoptosis. In Homo sapiens (Human), this protein is Zinc finger protein 385B (ZNF385B).